The primary structure comprises 208 residues: Small ribosomal subunit protein uS4 (208 aa).

Residues 98–158 (RRLDNVVYRL…EKSRGQLRIK (61 aa)) form the S4 RNA-binding domain.

The protein belongs to the universal ribosomal protein uS4 family. Part of the 30S ribosomal subunit. Contacts protein S5. The interaction surface between S4 and S5 is involved in control of translational fidelity.

Functionally, one of the primary rRNA binding proteins, it binds directly to 16S rRNA where it nucleates assembly of the body of the 30S subunit. With S5 and S12 plays an important role in translational accuracy. The polypeptide is Small ribosomal subunit protein uS4 (Magnetococcus marinus (strain ATCC BAA-1437 / JCM 17883 / MC-1)).